Reading from the N-terminus, the 464-residue chain is Trigger factor (464 aa).

The region spanning 169–256 is the PPIase FKBP-type domain; the sequence is GDVAIVDYRG…MKELKAKELP (88 aa).

Belongs to the FKBP-type PPIase family. Tig subfamily.

Its subcellular location is the cytoplasm. It catalyses the reaction [protein]-peptidylproline (omega=180) = [protein]-peptidylproline (omega=0). Involved in protein export. Acts as a chaperone by maintaining the newly synthesized protein in an open conformation. Functions as a peptidyl-prolyl cis-trans isomerase. This Microcystis aeruginosa (strain NIES-843 / IAM M-2473) protein is Trigger factor.